The chain runs to 119 residues: Protein TusC (119 aa).

Belongs to the DsrF/TusC family. Heterohexamer, formed by a dimer of trimers. The hexameric TusBCD complex contains 2 copies each of TusB, TusC and TusD. The TusBCD complex interacts with TusE.

It localises to the cytoplasm. In terms of biological role, part of a sulfur-relay system required for 2-thiolation of 5-methylaminomethyl-2-thiouridine (mnm(5)s(2)U) at tRNA wobble positions. This Klebsiella pneumoniae (strain 342) protein is Protein TusC.